Consider the following 485-residue polypeptide: Glutamate--tRNA ligase (485 aa).

Positions 11 to 21 (PSPTGLLHIGN) match the 'HIGH' region motif. Residues 255 to 259 (KLSKR) carry the 'KMSKS' region motif. Lysine 258 provides a ligand contact to ATP.

It belongs to the class-I aminoacyl-tRNA synthetase family. Glutamate--tRNA ligase type 1 subfamily. As to quaternary structure, monomer.

It localises to the cytoplasm. The enzyme catalyses tRNA(Glu) + L-glutamate + ATP = L-glutamyl-tRNA(Glu) + AMP + diphosphate. Functionally, catalyzes the attachment of glutamate to tRNA(Glu) in a two-step reaction: glutamate is first activated by ATP to form Glu-AMP and then transferred to the acceptor end of tRNA(Glu). The sequence is that of Glutamate--tRNA ligase from Streptococcus sanguinis (strain SK36).